We begin with the raw amino-acid sequence, 388 residues long: Cystathionine gamma-synthase (388 aa).

Positions 1–24 are disordered; the sequence is MSEDRTGHQGISGPATRAIHAGYR. Position 208 is an N6-(pyridoxal phosphate)lysine (Lys-208).

This sequence belongs to the trans-sulfuration enzymes family. Homotetramer. The cofactor is pyridoxal 5'-phosphate.

The protein localises to the cytoplasm. The enzyme catalyses O-succinyl-L-homoserine + L-cysteine = L,L-cystathionine + succinate + H(+). Catalyzes the formation of L-cystathionine from O-succinyl-L-homoserine (OSHS) and L-cysteine, via a gamma-replacement reaction. In the absence of thiol, catalyzes gamma-elimination to form 2-oxobutanoate, succinate and ammonia. The polypeptide is Cystathionine gamma-synthase (metB) (Mycobacterium bovis (strain ATCC BAA-935 / AF2122/97)).